The following is a 55-amino-acid chain: Large ribosomal subunit protein bL32 (55 aa).

Over residues 1 to 19 (MAVPKRRMSRANTHTRRSQ) the composition is skewed to basic residues. The interval 1 to 21 (MAVPKRRMSRANTHTRRSQWK) is disordered.

Belongs to the bacterial ribosomal protein bL32 family.

This is Large ribosomal subunit protein bL32 from Corynebacterium kroppenstedtii (strain DSM 44385 / JCM 11950 / CIP 105744 / CCUG 35717).